The following is a 612-amino-acid chain: tRNA(Met) cytidine acetyltransferase TmcA (612 aa).

ATP is bound by residues Gln136, 161–170, and Arg284; that span reads GRGKSTLLGQ. An N-acetyltransferase domain is found at 319–499; the sequence is KHASELEEAL…PAAIYALPLT (181 aa). 424–426 lines the acetyl-CoA pocket; sequence IAV.

It belongs to the RNA cytidine acetyltransferase family. TmcA subfamily.

The protein localises to the cytoplasm. The catalysed reaction is cytidine(34) in elongator tRNA(Met) + acetyl-CoA + ATP + H2O = N(4)-acetylcytidine(34) in elongator tRNA(Met) + ADP + phosphate + CoA + H(+). Its function is as follows. Catalyzes the formation of N(4)-acetylcytidine (ac(4)C) at the wobble position of tRNA(Met), by using acetyl-CoA as an acetyl donor and ATP (or GTP). The protein is tRNA(Met) cytidine acetyltransferase TmcA of Idiomarina loihiensis (strain ATCC BAA-735 / DSM 15497 / L2-TR).